The chain runs to 95 residues: Large ribosomal subunit protein bL27 (95 aa).

Residues 1–8 (MEMNLQFF) constitute a propeptide that is removed on maturation. Residues 1-34 (MEMNLQFFSHHKGGGSTSNGRDSAGRRLGTKRAD) are disordered.

Belongs to the bacterial ribosomal protein bL27 family. Post-translationally, the N-terminus is cleaved by ribosomal processing cysteine protease Prp.

The protein is Large ribosomal subunit protein bL27 of Pediococcus pentosaceus (strain ATCC 25745 / CCUG 21536 / LMG 10740 / 183-1w).